Here is a 620-residue protein sequence, read N- to C-terminus: MTIKSMTEYETISYKTFLDIFSPLPEIGEILEESESVEEAREKLFEFCKELEWEIRMGRIKFDNEVDRWLALKAIEVFLNIISKDNERLAGFSTLEYLWKAYKGDEEALKEIREGFIEEFRHLFLAMSGKADYSLGFLGKRLLEEGVKFIDFSKIKGREAGIARSNFLDKVYEIMREYISRYPSGLDKRIILKRKKNREILEEFFGITDEEWFNYKWQFKNVLRGLKGVKILRELREVTNFKISDEDLEIIEKAVKNGIPFGLTPYYLHLFDFENPYVEDLAVRRQVIPPEWYVEKMIEHKEDRNIAFDFMGEHDTSPIDLVTRRYVTIAIIKPYESCPQICVYCQRNWMVQDFDAKAFPGWEKVEKALDWFAEHDSMIEILITGGDPFSLSDKAIEKMLNRIAEMNHVVGVRFGTRTIVTAPMRITDELAELLGSFEKSLMISTHVESCYEITPEVAEAVKKLRTNNIYIYNQHVFHRYVSRRFENVALRIALKKVGIIPYYTFYPKGKMEHKDYLVPIARLAQEVKEEARLLPGSFRTDEPIFNVPRMGKNHLRAWQDRELIAIKPNGSRVYLMHPWEKGIYPTKLYTYEDVPIKEYLDSLKEIGENIEEYKTIWYYY.

One can recognise a Radical SAM core domain in the interval 324–586 (RRYVTIAIIK…HPWEKGIYPT (263 aa)). Positions 338, 342, and 345 each coordinate [4Fe-4S] cluster. The residue at position 552 (K552) is an N6-(pyridoxal phosphate)lysine.

Belongs to the radical SAM superfamily. KamA family. It depends on [4Fe-4S] cluster as a cofactor. The cofactor is pyridoxal 5'-phosphate.

This is an uncharacterized protein from Methanocaldococcus jannaschii (strain ATCC 43067 / DSM 2661 / JAL-1 / JCM 10045 / NBRC 100440) (Methanococcus jannaschii).